Consider the following 193-residue polypeptide: Thioredoxin peroxidase (193 aa).

Residues 3–161 form the Thioredoxin domain; the sequence is AVVGKLAPSF…ALRLLDAFQF (159 aa). Cys-48 functions as the Cysteine sulfenic acid (-SOH) intermediate in the catalytic mechanism.

This sequence belongs to the peroxiredoxin family. AhpC/Prx1 subfamily. Homodimer; disulfide-linked, upon oxidation.

It carries out the reaction a hydroperoxide + [thioredoxin]-dithiol = an alcohol + [thioredoxin]-disulfide + H2O. Thiol-specific peroxidase that catalyzes the reduction of hydrogen peroxide and organic hydroperoxides to water and alcohols, respectively. Plays a role in cell protection against oxidative stress by detoxifying peroxides and as sensor of hydrogen peroxide-mediated signaling events. The protein is Thioredoxin peroxidase (TPX) of Echinococcus granulosus (Hydatid tapeworm).